Here is a 163-residue protein sequence, read N- to C-terminus: Acetolactate synthase small subunit (163 aa).

One can recognise an ACT domain in the interval 4-79; it reads ILSVLLENES…VFKVVNLSEQ (76 aa).

Belongs to the acetolactate synthase small subunit family. Dimer of large and small chains.

It carries out the reaction 2 pyruvate + H(+) = (2S)-2-acetolactate + CO2. Its pathway is amino-acid biosynthesis; L-isoleucine biosynthesis; L-isoleucine from 2-oxobutanoate: step 1/4. It participates in amino-acid biosynthesis; L-valine biosynthesis; L-valine from pyruvate: step 1/4. This chain is Acetolactate synthase small subunit (ilvH), found in Haemophilus influenzae (strain ATCC 51907 / DSM 11121 / KW20 / Rd).